The chain runs to 117 residues: Immunoglobulin lambda variable 1-44 (117 aa).

Residues 1-19 (MASFPLLLTLLTHCAGSWA) form the signal peptide. Q20 is modified (pyrrolidone carboxylic acid). The framework-1 stretch occupies residues 20–44 (QSVLTQPPSASGTPGQRVTISCSGS). Residues 20-117 (QSVLTQPPSA…CAAWDDSLNG (98 aa)) enclose the Ig-like domain. Residues 24-35 (TQPPSASGTPGQ) are compositionally biased toward polar residues. A disordered region spans residues 24–45 (TQPPSASGTPGQRVTISCSGSS). Cysteines 41 and 108 form a disulfide. Residues 45–52 (SSNIGSNT) form a complementarity-determining-1 region. The segment at 53–69 (VNWYQQLPGTAPKLLIY) is framework-2. The tract at residues 70 to 72 (SNN) is complementarity-determining-2. The interval 73–108 (QRPSGVPDRFSGSKSGTSASLAISGLQSEDEADYYC) is framework-3. The interval 109-117 (AAWDDSLNG) is complementarity-determining-3.

In terms of assembly, immunoglobulins are composed of two identical heavy chains and two identical light chains; disulfide-linked.

The protein resides in the secreted. It is found in the cell membrane. V region of the variable domain of immunoglobulin light chains that participates in the antigen recognition. Immunoglobulins, also known as antibodies, are membrane-bound or secreted glycoproteins produced by B lymphocytes. In the recognition phase of humoral immunity, the membrane-bound immunoglobulins serve as receptors which, upon binding of a specific antigen, trigger the clonal expansion and differentiation of B lymphocytes into immunoglobulins-secreting plasma cells. Secreted immunoglobulins mediate the effector phase of humoral immunity, which results in the elimination of bound antigens. The antigen binding site is formed by the variable domain of one heavy chain, together with that of its associated light chain. Thus, each immunoglobulin has two antigen binding sites with remarkable affinity for a particular antigen. The variable domains are assembled by a process called V-(D)-J rearrangement and can then be subjected to somatic hypermutations which, after exposure to antigen and selection, allow affinity maturation for a particular antigen. This chain is Immunoglobulin lambda variable 1-44, found in Homo sapiens (Human).